Consider the following 338-residue polypeptide: Dehydrogenase/reductase SDR family member 7 (338 aa).

The signal sequence occupies residues 1–28 (MSWELLLWLLALCALILPLVQLLRFLRA). The NAD(+) site is built by Ser60 and Ile62. Residue Ser190 participates in substrate binding. 3 residues coordinate NAD(+): Tyr203, Lys207, and Ser239. Residue Tyr203 is the Proton acceptor of the active site.

The protein belongs to the short-chain dehydrogenases/reductases (SDR) family.

The protein resides in the endoplasmic reticulum membrane. The catalysed reaction is all-trans-retinol + NADP(+) = all-trans-retinal + NADPH + H(+). It catalyses the reaction 5alpha-androstane-3alpha,17beta-diol + NADP(+) = 17beta-hydroxy-5alpha-androstan-3-one + NADPH + H(+). Functionally, NADPH-dependent oxidoreductase which catalyzes the reduction of a variety of compounds bearing carbonyl groups including steroids, retinoids and xenobiotics. Catalyzes the reduction/inactivation of 5alpha-dihydrotestosterone to 3alpha-androstanediol, with a possible role in the modulation of androgen receptor function. Involved in the reduction of all-trans-retinal to all-trans-retinol. Converts cortisone to 20beta-dihydrocortisone in vitro, although the physiological relevance of this activity is questionable. Reduces exogenous compounds such as quinones (1,2-naphtoquinone, 9,10-phenantrenequinone and benzoquinone) and other xenobiotics (alpha-diketones) in vitro, suggesting a role in the biotransformation of xenobiotics with carbonyl group. A dehydrogenase activity has not been detected so far. May play a role as tumor suppressor. The polypeptide is Dehydrogenase/reductase SDR family member 7 (Mus musculus (Mouse)).